A 416-amino-acid polypeptide reads, in one-letter code: Probable glucan 1,3-beta-glucosidase A (416 aa).

Residues methionine 1 to alanine 21 form the signal peptide. Glutamate 209 acts as the Proton donor in catalysis. Intrachain disulfides connect cysteine 290/cysteine 415 and cysteine 316/cysteine 341. The active-site Nucleophile is glutamate 308.

The protein belongs to the glycosyl hydrolase 5 (cellulase A) family. Monomer. Mn(2+) serves as cofactor.

The protein resides in the secreted. The catalysed reaction is Successive hydrolysis of beta-D-glucose units from the non-reducing ends of (1-&gt;3)-beta-D-glucans, releasing alpha-glucose.. In terms of biological role, beta-glucanases participate in the metabolism of beta-glucan, the main structural component of the cell wall. It could also function biosynthetically as a transglycosylase. The polypeptide is Probable glucan 1,3-beta-glucosidase A (exgA) (Aspergillus terreus (strain NIH 2624 / FGSC A1156)).